We begin with the raw amino-acid sequence, 295 residues long: Transcription factor bHLH19 (295 aa).

Residues 115–164 (VLAKEHVLAERKRREKLSEKFIALSALLPGLKKADKVTILDDAISRMKQL) enclose the bHLH domain.

In terms of assembly, homodimer. Expressed in roots and leaves.

It is found in the nucleus. The sequence is that of Transcription factor bHLH19 (BHLH19) from Arabidopsis thaliana (Mouse-ear cress).